The primary structure comprises 102 residues: NAD(P)H-quinone oxidoreductase subunit 4L (102 aa).

The next 3 membrane-spanning stretches (helical) occupy residues leucine 4–valine 24, methionine 33–valine 53, and valine 65–isoleucine 85.

This sequence belongs to the complex I subunit 4L family. As to quaternary structure, NDH-1 can be composed of about 15 different subunits; different subcomplexes with different compositions have been identified which probably have different functions.

Its subcellular location is the cellular thylakoid membrane. It catalyses the reaction a plastoquinone + NADH + (n+1) H(+)(in) = a plastoquinol + NAD(+) + n H(+)(out). The enzyme catalyses a plastoquinone + NADPH + (n+1) H(+)(in) = a plastoquinol + NADP(+) + n H(+)(out). In terms of biological role, NDH-1 shuttles electrons from an unknown electron donor, via FMN and iron-sulfur (Fe-S) centers, to quinones in the respiratory and/or the photosynthetic chain. The immediate electron acceptor for the enzyme in this species is believed to be plastoquinone. Couples the redox reaction to proton translocation, and thus conserves the redox energy in a proton gradient. Cyanobacterial NDH-1 also plays a role in inorganic carbon-concentration. This Synechococcus sp. (strain JA-3-3Ab) (Cyanobacteria bacterium Yellowstone A-Prime) protein is NAD(P)H-quinone oxidoreductase subunit 4L.